We begin with the raw amino-acid sequence, 198 residues long: Inner membrane-spanning protein YciB (198 aa).

Helical transmembrane passes span 36–56 (IYSATAVLIISSVVVYGAIFI), 67–87 (LTLVACLVFGSLTLAFHSETF), 90–110 (WKAPVVNWLFALAFIGSHFIG), 135–155 (VAWIVFFLFCGAANLFVAFTF), and 162–182 (FKVFGSLGMTVLFLVAQGIYL).

Belongs to the YciB family.

Its subcellular location is the cell inner membrane. In terms of biological role, plays a role in cell envelope biogenesis, maintenance of cell envelope integrity and membrane homeostasis. The protein is Inner membrane-spanning protein YciB of Pseudomonas fluorescens (strain SBW25).